We begin with the raw amino-acid sequence, 80 residues long: DNA-binding protein HU-like (80 aa).

This sequence belongs to the bacterial histone-like protein family.

Functionally, histone-like DNA-binding protein which is capable of wrapping DNA to stabilize it, and thus to prevent its denaturation under extreme environmental conditions. The sequence is that of DNA-binding protein HU-like from Rickettsia conorii (strain ATCC VR-613 / Malish 7).